We begin with the raw amino-acid sequence, 188 residues long: Acireductone dioxygenase (188 aa).

Fe(2+)-binding residues include His-97, His-99, Glu-103, and His-141. Residues His-97, His-99, Glu-103, and His-141 each contribute to the Ni(2+) site.

It belongs to the acireductone dioxygenase (ARD) family. In terms of assembly, monomer. Requires Fe(2+) as cofactor. Ni(2+) is required as a cofactor.

The catalysed reaction is 1,2-dihydroxy-5-(methylsulfanyl)pent-1-en-3-one + O2 = 3-(methylsulfanyl)propanoate + CO + formate + 2 H(+). The enzyme catalyses 1,2-dihydroxy-5-(methylsulfanyl)pent-1-en-3-one + O2 = 4-methylsulfanyl-2-oxobutanoate + formate + 2 H(+). It participates in amino-acid biosynthesis; L-methionine biosynthesis via salvage pathway; L-methionine from S-methyl-5-thio-alpha-D-ribose 1-phosphate: step 5/6. Catalyzes 2 different reactions between oxygen and the acireductone 1,2-dihydroxy-3-keto-5-methylthiopentene (DHK-MTPene) depending upon the metal bound in the active site. Fe-containing acireductone dioxygenase (Fe-ARD) produces formate and 2-keto-4-methylthiobutyrate (KMTB), the alpha-ketoacid precursor of methionine in the methionine recycle pathway. Ni-containing acireductone dioxygenase (Ni-ARD) produces methylthiopropionate, carbon monoxide and formate, and does not lie on the methionine recycle pathway. This Xylella fastidiosa (strain M12) protein is Acireductone dioxygenase.